The primary structure comprises 417 residues: Phosphoglycerate kinase 1 (417 aa).

(2R)-3-phosphoglycerate is bound by residues Val23, Asp24, Phe25, Asn26, Asn38, Arg39, Ser62, His63, Gly65, Arg66, Leu121, Arg122, His168, and Arg169. Gly212 contributes to the ADP binding site. CDP is bound at residue Gly212. Ala213 and Lys214 together coordinate AMP. Residue Ala213 coordinates ATP. Mg(2+) is bound at residue Ala213. CDP is bound at residue Asp217. Residue Asp217 participates in Mg(2+) binding. Lys218 contributes to the AMP binding site. Lys218 is a binding site for ATP. Gly236 lines the ADP pocket. Gly236 is a binding site for CDP. Residues Gly237 and Gly311 each coordinate AMP. Residues Gly237 and Gly311 each coordinate ATP. The CDP site is built by Gly336 and Phe341. Phe341 provides a ligand contact to ADP. Position 342 (Glu342) interacts with AMP. ATP is bound by residues Glu342, Asp374, and Thr375. Residue Asp374 participates in Mg(2+) binding.

This sequence belongs to the phosphoglycerate kinase family. As to quaternary structure, monomer. It depends on Mg(2+) as a cofactor.

Its subcellular location is the cytoplasm. It localises to the mitochondrion. It catalyses the reaction (2R)-3-phosphoglycerate + ATP = (2R)-3-phospho-glyceroyl phosphate + ADP. It participates in carbohydrate degradation; glycolysis; pyruvate from D-glyceraldehyde 3-phosphate: step 2/5. Catalyzes one of the two ATP producing reactions in the glycolytic pathway via the reversible conversion of 1,3-diphosphoglycerate to 3-phosphoglycerate. Both L- and D- forms of purine and pyrimidine nucleotides can be used as substrates, but the activity is much lower on pyrimidines. Negatively regulates the biosynthesis of acetyl-CoA from pyruvate in the mitochondrion. This Rhizopus niveus protein is Phosphoglycerate kinase 1 (PGK1).